Here is a 167-residue protein sequence, read N- to C-terminus: 6,7-dimethyl-8-ribityllumazine synthase (167 aa).

5-amino-6-(D-ribitylamino)uracil-binding positions include F26, 60–62, and 89–91; these read AFE and AVI. 94-95 serves as a coordination point for (2S)-2-hydroxy-3-oxobutyl phosphate; sequence ET. The Proton donor role is filled by H97. Residue F122 participates in 5-amino-6-(D-ribitylamino)uracil binding. (2S)-2-hydroxy-3-oxobutyl phosphate is bound at residue R136.

Belongs to the DMRL synthase family. In terms of assembly, forms an icosahedral capsid composed of 60 subunits, arranged as a dodecamer of pentamers.

The enzyme catalyses (2S)-2-hydroxy-3-oxobutyl phosphate + 5-amino-6-(D-ribitylamino)uracil = 6,7-dimethyl-8-(1-D-ribityl)lumazine + phosphate + 2 H2O + H(+). It participates in cofactor biosynthesis; riboflavin biosynthesis; riboflavin from 2-hydroxy-3-oxobutyl phosphate and 5-amino-6-(D-ribitylamino)uracil: step 1/2. Functionally, catalyzes the formation of 6,7-dimethyl-8-ribityllumazine by condensation of 5-amino-6-(D-ribitylamino)uracil with 3,4-dihydroxy-2-butanone 4-phosphate. This is the penultimate step in the biosynthesis of riboflavin. In Vesicomyosocius okutanii subsp. Calyptogena okutanii (strain HA), this protein is 6,7-dimethyl-8-ribityllumazine synthase.